The sequence spans 239 residues: Uridylate kinase (239 aa).

Residue 12–15 (KLSG) coordinates ATP. The involved in allosteric activation by GTP stretch occupies residues 20–25 (GEKGFG). Gly-54 contributes to the UMP binding site. ATP-binding residues include Gly-55 and Arg-59. UMP-binding positions include Asp-72 and 133-140 (TGNPFFST). 2 residues coordinate ATP: Tyr-166 and Asp-169.

This sequence belongs to the UMP kinase family. In terms of assembly, homohexamer.

It localises to the cytoplasm. It carries out the reaction UMP + ATP = UDP + ADP. The protein operates within pyrimidine metabolism; CTP biosynthesis via de novo pathway; UDP from UMP (UMPK route): step 1/1. With respect to regulation, allosterically activated by GTP. Inhibited by UTP. Catalyzes the reversible phosphorylation of UMP to UDP. This chain is Uridylate kinase, found in Caldicellulosiruptor saccharolyticus (strain ATCC 43494 / DSM 8903 / Tp8T 6331).